The following is a 102-amino-acid chain: NADH-quinone oxidoreductase subunit K (102 aa).

The next 3 helical transmembrane spans lie at 5–25, 31–51, and 66–86; these read IAHYLTVSAIMFTVGIFGIFL, IIILMSIELILLSVNLNFVAF, and FILTVAAAEAAIGLAILVVFF.

Belongs to the complex I subunit 4L family. As to quaternary structure, NDH-1 is composed of 14 different subunits. Subunits NuoA, H, J, K, L, M, N constitute the membrane sector of the complex.

Its subcellular location is the cell inner membrane. The catalysed reaction is a quinone + NADH + 5 H(+)(in) = a quinol + NAD(+) + 4 H(+)(out). NDH-1 shuttles electrons from NADH, via FMN and iron-sulfur (Fe-S) centers, to quinones in the respiratory chain. The immediate electron acceptor for the enzyme in this species is believed to be ubiquinone. Couples the redox reaction to proton translocation (for every two electrons transferred, four hydrogen ions are translocated across the cytoplasmic membrane), and thus conserves the redox energy in a proton gradient. In Bartonella bacilliformis (strain ATCC 35685 / KC583 / Herrer 020/F12,63), this protein is NADH-quinone oxidoreductase subunit K.